We begin with the raw amino-acid sequence, 382 residues long: Mannitol-1-phosphate 5-dehydrogenase (382 aa).

3-14 (ALHFGAGNIGRG) contacts NAD(+).

It belongs to the mannitol dehydrogenase family.

It catalyses the reaction D-mannitol 1-phosphate + NAD(+) = beta-D-fructose 6-phosphate + NADH + H(+). This Salmonella newport (strain SL254) protein is Mannitol-1-phosphate 5-dehydrogenase.